The primary structure comprises 447 residues: Keratin, type I cytoskeletal 15 (447 aa).

Residues 1 to 93 (MATTFLQTSS…GGDGGLLSGN (93 aa)) form a head region. Phosphoserine occurs at positions 16, 28, 33, and 47. The tract at residues 94-129 (EKVTMQNLNDRLASYLDKVRALEEANTELEVKIRDW) is coil 1A. One can recognise an IF rod domain in the interval 94–406 (EKVTMQNLND…NLLEGQDAKM (313 aa)). Phosphothreonine is present on Thr-120. Residues 130-148 (YQKQSPASPDRDYSHYFKT) form a linker 1 region. The tract at residues 149 to 240 (MEEIRDKILA…KNHEEEMKEF (92 aa)) is coil 1B. A linker 12 region spans residues 241-260 (SSQLAGQVNVEMDAAPGVDL). Positions 261–402 (TRMLAEMREQ…STYRNLLEGQ (142 aa)) are coil 2. A Glycyl lysine isopeptide (Lys-Gly) (interchain with G-Cter in SUMO2) cross-link involves residue Lys-289. Thr-290 and Thr-312 each carry phosphothreonine. The tail stretch occupies residues 403 to 447 (DAKMAAIGVREASLRGGSSGGGSNFHISVEESVDGKVVSSRKRES). Residue Lys-438 forms a Glycyl lysine isopeptide (Lys-Gly) (interchain with G-Cter in SUMO1); alternate linkage. Lys-438 participates in a covalent cross-link: Glycyl lysine isopeptide (Lys-Gly) (interchain with G-Cter in SUMO2); alternate.

This sequence belongs to the intermediate filament family. In terms of assembly, heterotetramer of two type I and two type II keratins. Forms a heterodimer with KRT14. Interacts with NOD2.

The sequence is that of Keratin, type I cytoskeletal 15 from Rattus norvegicus (Rat).